A 155-amino-acid chain; its full sequence is 6,7-dimethyl-8-ribityllumazine synthase (155 aa).

Residues Phe24, 58-60, and 82-84 contribute to the 5-amino-6-(D-ribitylamino)uracil site; these read AFE and AII. A (2S)-2-hydroxy-3-oxobutyl phosphate-binding site is contributed by 87-88; it reads ST. The active-site Proton donor is His90. 5-amino-6-(D-ribitylamino)uracil is bound at residue Phe115. Position 129 (Arg129) interacts with (2S)-2-hydroxy-3-oxobutyl phosphate.

This sequence belongs to the DMRL synthase family.

The enzyme catalyses (2S)-2-hydroxy-3-oxobutyl phosphate + 5-amino-6-(D-ribitylamino)uracil = 6,7-dimethyl-8-(1-D-ribityl)lumazine + phosphate + 2 H2O + H(+). The protein operates within cofactor biosynthesis; riboflavin biosynthesis; riboflavin from 2-hydroxy-3-oxobutyl phosphate and 5-amino-6-(D-ribitylamino)uracil: step 1/2. Catalyzes the formation of 6,7-dimethyl-8-ribityllumazine by condensation of 5-amino-6-(D-ribitylamino)uracil with 3,4-dihydroxy-2-butanone 4-phosphate. This is the penultimate step in the biosynthesis of riboflavin. In Chlorobium luteolum (strain DSM 273 / BCRC 81028 / 2530) (Pelodictyon luteolum), this protein is 6,7-dimethyl-8-ribityllumazine synthase.